Consider the following 60-residue polypeptide: Serum basic protease inhibitor (60 aa).

Positions 7–57 (CLEPPYTGPCKAAMIRYFYNAKAGFCETFVYGGCRAKSNNFKSAEDCMRTC) constitute a BPTI/Kunitz inhibitor domain. 3 cysteine pairs are disulfide-bonded: cysteine 7–cysteine 57, cysteine 16–cysteine 40, and cysteine 32–cysteine 53.

It localises to the secreted. Functionally, this inhibitor has activity very similar to that of the basic protease inhibitor from bovine tissues. The polypeptide is Serum basic protease inhibitor (Bos taurus (Bovine)).